The chain runs to 333 residues: Chemokine XC receptor 1 (333 aa).

Topologically, residues 1–31 are extracellular; that stretch reads MESSGNPESTTFFYYDLQSQPCENQAWVFAT. Residues 32–59 form a helical membrane-spanning segment; sequence LATTVLYCLVFLLSLVGNSLVLWVLVKY. Topologically, residues 60–69 are cytoplasmic; it reads ESLESLTNIF. A helical membrane pass occupies residues 70–89; sequence ILNLCLSDLVFACLLPVWIS. The Extracellular segment spans residues 90–103; it reads PYHWGWVLGDFLCK. The cysteines at positions 102 and 175 are disulfide-linked. A helical transmembrane segment spans residues 104 to 125; that stretch reads LLNMIFSISLYSSIFFLTIMTI. Topologically, residues 126 to 142 are cytoplasmic; the sequence is HRYLSVVSPLSTLRVPT. A helical transmembrane segment spans residues 143 to 167; it reads LRCRVLVTMAVWVASILSSILDTIF. Topologically, residues 168–190 are extracellular; it reads HKVLSSGCDYSELTWYLTSVYQH. A helical membrane pass occupies residues 191–209; that stretch reads NLFFLLSLGIILFCYVEIL. At 210 to 225 the chain is on the cytoplasmic side; it reads RTLFRSRSKRRHRTVK. Residues 226-250 traverse the membrane as a helical segment; that stretch reads LIFAIVVAYFLSWGPYNFTLFLQTL. The Extracellular segment spans residues 251–267; sequence FRTQIIRSCEAKQQLEY. The helical transmembrane segment at 268 to 291 threads the bilayer; sequence ALLICRNLAFSHCCFNPVLYVFVG. Residues 292-333 are Cytoplasmic-facing; sequence VKFRTHLKHVLRQFWFCRLQAPSPASIPHSPGAFAYEGASFY.

Belongs to the G-protein coupled receptor 1 family.

It is found in the cell membrane. In terms of biological role, receptor for chemokines SCYC1 and SCYC2. Subsequently transduces a signal by increasing the intracellular calcium ions level. Receptor for XCL1/Lymphotactin. This chain is Chemokine XC receptor 1 (XCR1), found in Homo sapiens (Human).